A 345-amino-acid polypeptide reads, in one-letter code: MKVAIIGATGYGGIELIRLLEQHPYFSIASLHSFSQVGEFITNVYPHFRNVLVHTLQEIDAEKIEKEAEIVFLATPAGVSAELTPKLLAVGLKVIDLSGDFRMIDPSSYELWYKRPAAQEELLRKAVYGLSEWKRPEIQNANLIANPGCFATAALLAVAPLVRSGIIEEASIIIDAKSGVSGAGKTPTTMTHFPELYDNLHIYKVNQHQHVPEIEQMLTEWNRETKPITFSTHLIPISRGIMITLYAKVKEEMKIEQLQKLYEETYEYSAFVRVRSQGEFPSPKEVRGSNYCDIGIAYDERTERVTVVSVIDNMMKGAAGQAVQNANLLAGLEETTGLQHMPLYP.

The active site involves Cys-149.

Belongs to the NAGSA dehydrogenase family. Type 1 subfamily.

It is found in the cytoplasm. The enzyme catalyses N-acetyl-L-glutamate 5-semialdehyde + phosphate + NADP(+) = N-acetyl-L-glutamyl 5-phosphate + NADPH + H(+). It participates in amino-acid biosynthesis; L-arginine biosynthesis; N(2)-acetyl-L-ornithine from L-glutamate: step 3/4. Functionally, catalyzes the NADPH-dependent reduction of N-acetyl-5-glutamyl phosphate to yield N-acetyl-L-glutamate 5-semialdehyde. In Bacillus mycoides (strain KBAB4) (Bacillus weihenstephanensis), this protein is N-acetyl-gamma-glutamyl-phosphate reductase.